A 179-amino-acid polypeptide reads, in one-letter code: Large ribosomal subunit protein uL6 (179 aa).

It belongs to the universal ribosomal protein uL6 family. As to quaternary structure, part of the 50S ribosomal subunit.

This protein binds to the 23S rRNA, and is important in its secondary structure. It is located near the subunit interface in the base of the L7/L12 stalk, and near the tRNA binding site of the peptidyltransferase center. This Chlorobium limicola (strain DSM 245 / NBRC 103803 / 6330) protein is Large ribosomal subunit protein uL6.